A 160-amino-acid chain; its full sequence is Large ribosomal subunit protein uL30m (160 aa).

The transit peptide at 1–34 (MAGVLRSAFPRPPCRLQTVKKGAESLIGTEWIRH) directs the protein to the mitochondrion. The tract at residues 44–64 (KVFQPKPEDHEKYGGDPQNPH) is disordered.

Belongs to the universal ribosomal protein uL30 family. As to quaternary structure, component of the mitochondrial ribosome large subunit (39S) which comprises a 16S rRNA and about 50 distinct proteins.

The protein localises to the mitochondrion. The sequence is that of Large ribosomal subunit protein uL30m (Mrpl30) from Mus musculus (Mouse).